A 513-amino-acid chain; its full sequence is Glycogen synthase (513 aa).

K47 serves as a coordination point for ADP-alpha-D-glucose.

Belongs to the glycosyltransferase 1 family. Bacterial/plant glycogen synthase subfamily.

It catalyses the reaction [(1-&gt;4)-alpha-D-glucosyl](n) + ADP-alpha-D-glucose = [(1-&gt;4)-alpha-D-glucosyl](n+1) + ADP + H(+). Its pathway is glycan biosynthesis; glycogen biosynthesis. Its function is as follows. Synthesizes alpha-1,4-glucan chains using ADP-glucose. This is Glycogen synthase from Pseudomonas aeruginosa (strain ATCC 15692 / DSM 22644 / CIP 104116 / JCM 14847 / LMG 12228 / 1C / PRS 101 / PAO1).